Here is a 551-residue protein sequence, read N- to C-terminus: Adenine deaminase (551 aa).

It belongs to the metallo-dependent hydrolases superfamily. Adenine deaminase family. Requires Mn(2+) as cofactor.

The enzyme catalyses adenine + H2O + H(+) = hypoxanthine + NH4(+). The sequence is that of Adenine deaminase from Leuconostoc mesenteroides subsp. mesenteroides (strain ATCC 8293 / DSM 20343 / BCRC 11652 / CCM 1803 / JCM 6124 / NCDO 523 / NBRC 100496 / NCIMB 8023 / NCTC 12954 / NRRL B-1118 / 37Y).